The sequence spans 421 residues: MHQTITEKIFSDHVGREVFANEIIESGIDMVIGNDITTPISIKQFERSGATKLANPEGFCIVMDHYIPAKDILSANQAKISRDFAYKHDLKYFFDEKDMGIEHALLPEKGLIVPGDVIIGADSHTCTHGALGAFSTGMGSTDLAYAMITGKNWFKVPPTIKVVFRGKLGRHVYGKDLILEIIRQIGVDGARYKALEFCGETIDALDMDGRFSMCNMAIEAGGKSGIIAVDETTREFLKGKNLRAEPKFFYSDEGAGYERVLEIYADKLDPVIAYPFLPSNGKSVREAVKDDIAIDQAFIGSCTNGRLSDLRIAAEILKGRKVSRKTRLIITPATQKIALAAQKEGLMDIFVEAGAVVSNPTCGACLGGYMGILGAGERCVSTTNRNFVGRMGDRTSEVYLANSAVAAASAIAGKIADPREL.

Positions 302, 362, and 365 each coordinate [4Fe-4S] cluster.

It belongs to the aconitase/IPM isomerase family. LeuC type 2 subfamily. Heterodimer of LeuC and LeuD. It depends on [4Fe-4S] cluster as a cofactor.

The enzyme catalyses (2R,3S)-3-isopropylmalate = (2S)-2-isopropylmalate. It participates in amino-acid biosynthesis; L-leucine biosynthesis; L-leucine from 3-methyl-2-oxobutanoate: step 2/4. Catalyzes the isomerization between 2-isopropylmalate and 3-isopropylmalate, via the formation of 2-isopropylmaleate. The polypeptide is 3-isopropylmalate dehydratase large subunit (Campylobacter curvus (strain 525.92)).